The sequence spans 190 residues: C-type lectin domain family 5 member A (190 aa).

Over 1 to 4 (MNWH) the chain is Cytoplasmic. The chain crosses the membrane as a helical; Signal-anchor for type II membrane protein span at residues 5–25 (MIISGLIVVVIKVVGMTFFLL). Residues 26-190 (YFPQVFGKSN…YRWICEMNAK (165 aa)) are Extracellular-facing. Residues Asn-51, Asn-146, and Asn-153 are each glycosylated (N-linked (GlcNAc...) asparagine). One can recognise a C-type lectin domain in the interval 80 to 186 (HQGKCFFFSF…CEVSYRWICE (107 aa)). 2 disulfide bridges follow: Cys-101–Cys-185 and Cys-163–Cys-177.

In terms of assembly, monomer. Homodimer. The majority of CLEC5A is expressed as a monomeric form on macrophages. Interacts with TYROBP/DAP12. The interaction with TYROBP is required for CLEC5 cell surface expression. Interacts with HCST/DAP10. Forms a CLEC5A/TYROBP/HCST trimolecular complex depending almost solely on TYROBP. Post-translationally, N-glycosylated. Contains sialic acid residues. As to expression, strong expression in bone marrow cells and thioglycollate-induced neutrophils (at protein level). Expressed on granulocytes and monocytes from bone marrow and peripheral blood. Expressed in macrophage cell line J-774, but not in T-cell lines, B-cell lines, or mast cell lines.

Its subcellular location is the cell membrane. Functionally, functions as a positive regulator of osteoclastogenesis. Cell surface receptor that signals via TYROBP. Regulates inflammatory responses. This Mus musculus (Mouse) protein is C-type lectin domain family 5 member A (Clec5a).